The chain runs to 380 residues: Putative RNA ligase (380 aa).

Functionally, putative RNA ligase. Is able to catalyze the adenylation reaction of ssDNA 3'-terminal phosphate (ssDNA 3'p) to 3'-adenylated DNA (ssDNA 3'pp5'A). The chain is Putative RNA ligase from Thermovibrio ammonificans (strain DSM 15698 / JCM 12110 / HB-1).